Here is a 647-residue protein sequence, read N- to C-terminus: 1-deoxy-D-xylulose-5-phosphate synthase (647 aa).

Thiamine diphosphate is bound by residues H72 and 113–115 (GHA). A Mg(2+)-binding site is contributed by D144. Residues 145 to 146 (GA), N174, Y287, and E370 each bind thiamine diphosphate. A Mg(2+)-binding site is contributed by N174.

It belongs to the transketolase family. DXPS subfamily. In terms of assembly, homodimer. Requires Mg(2+) as cofactor. Thiamine diphosphate is required as a cofactor.

The catalysed reaction is D-glyceraldehyde 3-phosphate + pyruvate + H(+) = 1-deoxy-D-xylulose 5-phosphate + CO2. It participates in metabolic intermediate biosynthesis; 1-deoxy-D-xylulose 5-phosphate biosynthesis; 1-deoxy-D-xylulose 5-phosphate from D-glyceraldehyde 3-phosphate and pyruvate: step 1/1. Catalyzes the acyloin condensation reaction between C atoms 2 and 3 of pyruvate and glyceraldehyde 3-phosphate to yield 1-deoxy-D-xylulose-5-phosphate (DXP). This Synechococcus sp. (strain WH7803) protein is 1-deoxy-D-xylulose-5-phosphate synthase.